Here is a 316-residue protein sequence, read N- to C-terminus: MQSSDETDILATIGTRGSPLALAQAHEVRDRLARAHQVAPERIAIKTIRTSGDAIQDRPLFDVGGKGLFTKEIEEALLAGTIDFAVHSSKDVPTFLPDATWLPAFLPREDVRDVFISPHAGSLNDLPAGATVGTASLRRQAMVLKLRPDLKVNSLRGNVETRLRKISVGEADATLLALAGLNRLGLQDKATRILETDEFLPAVGQGAIAIESRRDDDRINAFVKAIGDPETEVALSAERSFLALLDGSCRTPIGGHCRVNGDRIDFRGLIISPDGTEFYETTREGARADAAALGADAAHELRERAGEKFFTLFAGA.

Cys-249 is subject to S-(dipyrrolylmethanemethyl)cysteine.

Belongs to the HMBS family. Monomer. Dipyrromethane serves as cofactor.

It carries out the reaction 4 porphobilinogen + H2O = hydroxymethylbilane + 4 NH4(+). It participates in porphyrin-containing compound metabolism; protoporphyrin-IX biosynthesis; coproporphyrinogen-III from 5-aminolevulinate: step 2/4. Its function is as follows. Tetrapolymerization of the monopyrrole PBG into the hydroxymethylbilane pre-uroporphyrinogen in several discrete steps. This chain is Porphobilinogen deaminase, found in Nitrobacter winogradskyi (strain ATCC 25391 / DSM 10237 / CIP 104748 / NCIMB 11846 / Nb-255).